The primary structure comprises 173 residues: Placenta-specific protein 1 (173 aa).

A signal peptide spans 1-23; that stretch reads MNLRKFLGGTVLVAFMLFSYSEQ.

This sequence belongs to the PLAC1 family. In terms of tissue distribution, expressed in placenta.

Its subcellular location is the secreted. Functionally, may play a role in placental development. The chain is Placenta-specific protein 1 from Mus musculus (Mouse).